Reading from the N-terminus, the 185-residue chain is NEDD8-conjugating enzyme UBE2F (185 aa).

M1 is modified (N-acetylmethionine). The interval 1–29 (MLTLASKLKRDDGLKGSRTAATASDSTRR) is interaction with UBA3. The region spanning 32–185 (VRDKLLVKEV…VDDYIKRYAR (154 aa)) is the UBC core domain. Residue C116 is the Glycyl thioester intermediate of the active site.

This sequence belongs to the ubiquitin-conjugating enzyme family. UBE2F subfamily. In terms of assembly, interacts with UBA3 and RBX2. Interacts (N-terminally acetylated form) with (via DCUN1 domain) DCUN1D1, DCUN1D2, DCUN1D3, DCUN1D4 and DCUN1D5. Post-translationally, the acetylation of Met-1 increases affinity for DCUN1D3 by about 2 orders of magnitude and is crucial for NEDD8 transfer to cullins. In terms of tissue distribution, widely expressed (at protein level).

It carries out the reaction [E1 NEDD8-activating enzyme]-S-[NEDD8 protein]-yl-L-cysteine + [E2 NEDD8-conjugating enzyme]-L-cysteine = [E1 NEDD8-activating enzyme]-L-cysteine + [E2 NEDD8-conjugating enzyme]-S-[NEDD8-protein]-yl-L-cysteine.. It functions in the pathway protein modification; protein neddylation. In terms of biological role, accepts the ubiquitin-like protein NEDD8 from the UBA3-NAE1 E1 complex and catalyzes its covalent attachment to other proteins. Together with the E3 ubiquitin ligase RNF7/RBX2, specifically neddylates cullin-5 (CUL5). Does not neddylate CUL1, CUL2, CUL3, CUL4A or CUL4B. Mediates neddylation of the CUL9-RBX1 complex. (Microbial infection) Following infection by HIV-1 virus, participates to HIV-1 Vif protein-mediated ubiquitination and degradation of APOBEC3G by mediating neddylation of cullin-5 (CUL5). The polypeptide is NEDD8-conjugating enzyme UBE2F (UBE2F) (Homo sapiens (Human)).